The primary structure comprises 558 residues: Factor VII-activating protease (558 aa).

The signal sequence occupies residues 1 to 23; sequence MSVVMLVFRVLLLIALVGNSAIG. 3 consecutive EGF-like domains span residues 71–107, 109–146, and 148–186; these read DDDP…SRCQ, VQNK…PDCS, and VLPV…RFCE. 18 cysteine pairs are disulfide-bonded: cysteine 75-cysteine 86, cysteine 80-cysteine 95, cysteine 97-cysteine 106, cysteine 113-cysteine 123, cysteine 118-cysteine 134, cysteine 136-cysteine 145, cysteine 152-cysteine 163, cysteine 157-cysteine 174, cysteine 176-cysteine 185, cysteine 192-cysteine 274, cysteine 213-cysteine 255, cysteine 244-cysteine 269, cysteine 299-cysteine 433, cysteine 345-cysteine 361, cysteine 353-cysteine 422, cysteine 445-cysteine 513, cysteine 475-cysteine 491, and cysteine 503-cysteine 531. One can recognise a Kringle domain in the interval 191-274; that stretch reads DCYVGDGYSY…KWEYCNVEVC (84 aa). One can recognise a Peptidase S1 domain in the interval 312–553; the sequence is IYGGFKSTAG…FLNWIKTTMH (242 aa). Active-site charge relay system residues include histidine 360 and aspartate 409. Serine 507 (charge relay system) is an active-site residue.

This sequence belongs to the peptidase S1 family. Heterodimer; disulfide-linked. Heterodimer of a 50 kDa heavy and a 27 kDa light chain linked by a disulfide bond. Proteolytic cleavage at Gly-23 or Met-27 can give rise to the 50 kDa heavy chain (HC) and cleavage at Arg-311 or Lys-317 can give rise to the 27 kDa light chain (LC). The HC can undergo further proteolytic cleavage giving rise to a 26 kDa fragment. The LC can undergo further proteolytic cleavage at Arg-311 leading to a 17-kDa fragment and at Arg-478 leading to a 8-kDa fragment.

The protein localises to the secreted. Cleaves the alpha-chain at multiple sites and the beta-chain between 'Lys-53' and 'Lys-54' but not the gamma-chain of fibrinogen and therefore does not initiate the formation of the fibrin clot and does not cause the fibrinolysis directly. It does not cleave (activate) prothrombin and plasminogen but converts the inactive single chain urinary plasminogen activator (pro-urokinase) to the active two chain form. Activates coagulation factor VII. May function as a tumor suppressor negatively regulating cell proliferation and cell migration. This Rattus norvegicus (Rat) protein is Factor VII-activating protease.